The primary structure comprises 217 residues: MNDTTPVIIRQLGRQAYFPIWQAMQDFTDSRDSSSQDEIWLVEHDPVFTQGQAGKEEHLLAPGDIPVVKVDRGGQVTYHGPGQQMMYVLLNLKRHGLGVRTLVSALESCIVDTLKEYKVDAYPKADAPGVYVDNKKVCSIGLRIRRGCSFHGLALNVNMDLAPFQRINPCGYAGLEMVDCTQLGGPDSLAVAGPAIAEKLCSLLGIASVENKEGFDE.

The region spanning 33-208 (SSSQDEIWLV…KLCSLLGIAS (176 aa)) is the BPL/LPL catalytic domain. Residues 72-79 (RGGQVTYH), 139-141 (SIG), and 152-154 (GLA) contribute to the substrate site. Catalysis depends on Cys-170, which acts as the Acyl-thioester intermediate.

It belongs to the LipB family.

It localises to the cytoplasm. It catalyses the reaction octanoyl-[ACP] + L-lysyl-[protein] = N(6)-octanoyl-L-lysyl-[protein] + holo-[ACP] + H(+). It functions in the pathway protein modification; protein lipoylation via endogenous pathway; protein N(6)-(lipoyl)lysine from octanoyl-[acyl-carrier-protein]: step 1/2. In terms of biological role, catalyzes the transfer of endogenously produced octanoic acid from octanoyl-acyl-carrier-protein onto the lipoyl domains of lipoate-dependent enzymes. Lipoyl-ACP can also act as a substrate although octanoyl-ACP is likely to be the physiological substrate. The polypeptide is Octanoyltransferase (Pseudoalteromonas atlantica (strain T6c / ATCC BAA-1087)).